A 170-amino-acid chain; its full sequence is 4-hydroxyphenylacetate 3-monooxygenase reductase component (170 aa).

This sequence belongs to the non-flavoprotein flavin reductase family. HpaC subfamily. Monomer. HPA 3-hydroxylase consists of a reductase component HpaC and an oxygenase component HpaB. Some form of interactions between the reductase and the oxygenase facilitate the transfer of FADH(-) to the oxygenase in P.aeruginosa, although interactions are not required in other species.

The enzyme catalyses FADH2 + NAD(+) = FAD + NADH + 2 H(+). The protein operates within aromatic compound metabolism; 4-hydroxyphenylacetate degradation; pyruvate and succinate semialdehyde from 4-hydroxyphenylacetate: step 1/7. The rate of FAD reduction is independent of the presence of HPA, demonstrating that, in contrast to HPAH from A.baumannii, the activity of the HPAH reductase is not allosterically regulated by the substrate. Functionally, reductase component of the 4-hydroxyphenylacetate (HPA) 3-hydroxylase. Catalyzes the reduction of FAD by NADH. The reduced flavin is then transferred to the oxygenase component HpaB. Is also able to reduce FMN and riboflavin, but preferentially binds FAD. Has no activity with NADPH as the reductant. The polypeptide is 4-hydroxyphenylacetate 3-monooxygenase reductase component (Pseudomonas aeruginosa (strain ATCC 15692 / DSM 22644 / CIP 104116 / JCM 14847 / LMG 12228 / 1C / PRS 101 / PAO1)).